The sequence spans 167 residues: Phosphopantetheine adenylyltransferase (167 aa).

Residue Ser-9 coordinates substrate. ATP-binding positions include 9-10 (SF) and His-17. Positions 41, 78, and 92 each coordinate substrate. ATP contacts are provided by residues 93–95 (GLR), Glu-103, and 128–134 (SRPITAT).

This sequence belongs to the bacterial CoaD family. Homohexamer. Mg(2+) serves as cofactor.

Its subcellular location is the cytoplasm. The enzyme catalyses (R)-4'-phosphopantetheine + ATP + H(+) = 3'-dephospho-CoA + diphosphate. Its pathway is cofactor biosynthesis; coenzyme A biosynthesis; CoA from (R)-pantothenate: step 4/5. Functionally, reversibly transfers an adenylyl group from ATP to 4'-phosphopantetheine, yielding dephospho-CoA (dPCoA) and pyrophosphate. This chain is Phosphopantetheine adenylyltransferase, found in Rhizobium rhizogenes (strain K84 / ATCC BAA-868) (Agrobacterium radiobacter).